The chain runs to 640 residues: Chaperone protein DnaK (640 aa).

Threonine 196 carries the phosphothreonine; by autocatalysis modification. A compositionally biased stretch (basic and acidic residues) spans 547-569 (GDKIPSDKRPALEGALEKLKDAT). 2 disordered regions span residues 547–575 (GDKIPSDKRPALEGALEKLKDATKNGTTE) and 595–640 (LYQA…GNGK). The segment covering 603–615 (TNASEPTQNTDGS) has biased composition (polar residues). Acidic residues predominate over residues 625-634 (GEVENAEFEV).

This sequence belongs to the heat shock protein 70 family.

Its function is as follows. Acts as a chaperone. The sequence is that of Chaperone protein DnaK from Chlorobium phaeobacteroides (strain DSM 266 / SMG 266 / 2430).